The primary structure comprises 268 residues: Tryptophan synthase alpha chain (268 aa).

Catalysis depends on proton acceptor residues glutamate 49 and aspartate 60.

The protein belongs to the TrpA family. In terms of assembly, tetramer of two alpha and two beta chains.

It catalyses the reaction (1S,2R)-1-C-(indol-3-yl)glycerol 3-phosphate + L-serine = D-glyceraldehyde 3-phosphate + L-tryptophan + H2O. It participates in amino-acid biosynthesis; L-tryptophan biosynthesis; L-tryptophan from chorismate: step 5/5. The alpha subunit is responsible for the aldol cleavage of indoleglycerol phosphate to indole and glyceraldehyde 3-phosphate. In Haemophilus influenzae (strain PittEE), this protein is Tryptophan synthase alpha chain.